A 403-amino-acid chain; its full sequence is MIHTNLKRKFSCFVLVFLLFAIICVWKKGSDYEALTLQAKVFQMPKSQEKVAVGPAPQAVFSNSKQDPKEGVQILSYPRVTAKVKPQPSLQVWDKDSTYSKLNPRLLKIWRNYLNMNKYKVSYKGPGPGVKFSVEALRCHLRDHVNVSMIEATDFPFNTTEWEGYLPKENFRTKAGPWHKCAVVSSAGSLKNSQLGREIDNHDAVLRFNGAPTDNFQQDVGTKTTIRLVNSQLVTTEKRFLKDSLYTEGILILWDPSVYHADIPQWYQKPDYNFFETYKSYRRLHPSQPFYILKPQMPWELWDIIQEISPDLIQPNPPSSGMLGIIIMMTLCDQVDIYEFLPSKRKTDVCYYHQKFFDSACTMGAYHPLLFEKNMVKHLNEGTDEDIYLFGKATLSGFRNNRC.

The Cytoplasmic portion of the chain corresponds to 1-9; the sequence is MIHTNLKRK. The helical; Signal-anchor for type II membrane protein transmembrane segment at 10 to 26 threads the bilayer; that stretch reads FSCFVLVFLLFAIICVW. The Lumenal portion of the chain corresponds to 27–403; it reads KKGSDYEALT…TLSGFRNNRC (377 aa). Disulfide bonds link C139-C403, C181-C332, and C350-C361. N146 and N158 each carry an N-linked (GlcNAc...) asparagine glycan. Residues S186, N209, N230, 319–321, C350, Y351, T362, Y366, H367, and K373 each bind substrate; that span reads SSG. A Phosphotyrosine modification is found at Y366.

Belongs to the glycosyltransferase 29 family. In terms of assembly, monomer and homodimer. Post-translationally, N-glycosylated.

The protein resides in the golgi apparatus. The protein localises to the golgi stack membrane. It localises to the secreted. It carries out the reaction a beta-D-galactoside + CMP-N-acetyl-beta-neuraminate = an N-acetyl-alpha-neuraminyl-(2-&gt;6)-beta-D-galactosyl derivative + CMP + H(+). The protein operates within protein modification; protein glycosylation. Its function is as follows. Transfers sialic acid from CMP-sialic acid to galactose-containing acceptor substrates. In Mus musculus (Mouse), this protein is Beta-galactoside alpha-2,6-sialyltransferase 1 (St6gal1).